Reading from the N-terminus, the 188-residue chain is NADH-quinone oxidoreductase subunit I (188 aa).

2 4Fe-4S ferredoxin-type domains span residues 44-74 and 90-119; these read LNRYADGLEKCIGCELCAWACPADAIYVEGA and QVYQINYLRCIGCGLCIEACPTRALTMTNE. Cys54, Cys57, Cys60, Cys64, Cys99, Cys102, Cys105, and Cys109 together coordinate [4Fe-4S] cluster. Residues 167 to 188 form a disordered region; sequence TGGAAAAAQDESEVDDTAGDRP. A compositionally biased stretch (acidic residues) spans 176 to 188; sequence DESEVDDTAGDRP.

The protein belongs to the complex I 23 kDa subunit family. As to quaternary structure, NDH-1 is composed of 14 different subunits. Subunits NuoA, H, J, K, L, M, N constitute the membrane sector of the complex. Requires [4Fe-4S] cluster as cofactor.

Its subcellular location is the cell membrane. The enzyme catalyses a quinone + NADH + 5 H(+)(in) = a quinol + NAD(+) + 4 H(+)(out). Functionally, NDH-1 shuttles electrons from NADH, via FMN and iron-sulfur (Fe-S) centers, to quinones in the respiratory chain. The immediate electron acceptor for the enzyme in this species is believed to be ubiquinone. Couples the redox reaction to proton translocation (for every two electrons transferred, four hydrogen ions are translocated across the cytoplasmic membrane), and thus conserves the redox energy in a proton gradient. This is NADH-quinone oxidoreductase subunit I from Rhodococcus jostii (strain RHA1).